The sequence spans 180 residues: ATP synthase subunit delta (180 aa).

The protein belongs to the ATPase delta chain family. In terms of assembly, F-type ATPases have 2 components, F(1) - the catalytic core - and F(0) - the membrane proton channel. F(1) has five subunits: alpha(3), beta(3), gamma(1), delta(1), epsilon(1). F(0) has three main subunits: a(1), b(2) and c(10-14). The alpha and beta chains form an alternating ring which encloses part of the gamma chain. F(1) is attached to F(0) by a central stalk formed by the gamma and epsilon chains, while a peripheral stalk is formed by the delta and b chains.

It localises to the cell membrane. F(1)F(0) ATP synthase produces ATP from ADP in the presence of a proton or sodium gradient. F-type ATPases consist of two structural domains, F(1) containing the extramembraneous catalytic core and F(0) containing the membrane proton channel, linked together by a central stalk and a peripheral stalk. During catalysis, ATP synthesis in the catalytic domain of F(1) is coupled via a rotary mechanism of the central stalk subunits to proton translocation. Its function is as follows. This protein is part of the stalk that links CF(0) to CF(1). It either transmits conformational changes from CF(0) to CF(1) or is implicated in proton conduction. The polypeptide is ATP synthase subunit delta (Mycoplasma mobile (strain ATCC 43663 / 163K / NCTC 11711) (Mesomycoplasma mobile)).